Here is a 365-residue protein sequence, read N- to C-terminus: Phosphoserine aminotransferase (365 aa).

Arginine 40 lines the L-glutamate pocket. Pyridoxal 5'-phosphate is bound by residues 74 to 75, phenylalanine 99, threonine 155, aspartate 177, and glutamine 200; that span reads AS. Lysine 201 carries the post-translational modification N6-(pyridoxal phosphate)lysine. Pyridoxal 5'-phosphate is bound at residue 241 to 242; the sequence is NT.

It belongs to the class-V pyridoxal-phosphate-dependent aminotransferase family. SerC subfamily. Homodimer. It depends on pyridoxal 5'-phosphate as a cofactor.

It localises to the cytoplasm. It catalyses the reaction O-phospho-L-serine + 2-oxoglutarate = 3-phosphooxypyruvate + L-glutamate. The enzyme catalyses 4-(phosphooxy)-L-threonine + 2-oxoglutarate = (R)-3-hydroxy-2-oxo-4-phosphooxybutanoate + L-glutamate. Its pathway is amino-acid biosynthesis; L-serine biosynthesis; L-serine from 3-phospho-D-glycerate: step 2/3. Catalyzes the reversible conversion of 3-phosphohydroxypyruvate to phosphoserine and of 3-hydroxy-2-oxo-4-phosphonooxybutanoate to phosphohydroxythreonine. The protein is Phosphoserine aminotransferase of Lactococcus lactis subsp. lactis (strain IL1403) (Streptococcus lactis).